Reading from the N-terminus, the 291-residue chain is uncharacterized protein (291 aa).

The HTH lysR-type domain maps to 1–58; the sequence is MDLKWLQTFIAAAESESFREAAEHLYLTQPAVSQHMRKLEDELDMRLFLHSGRRVVLT. Positions 18 to 37 form a DNA-binding region, H-T-H motif; the sequence is FREAAEHLYLTQPAVSQHMR.

It belongs to the LysR transcriptional regulatory family.

This is an uncharacterized protein from Bacillus subtilis (strain 168).